Here is a 279-residue protein sequence, read N- to C-terminus: Acetylglutamate kinase (279 aa).

Substrate contacts are provided by residues 64 to 65 (GG), Arg-86, and Asn-177.

It belongs to the acetylglutamate kinase family. ArgB subfamily.

The protein resides in the cytoplasm. The catalysed reaction is N-acetyl-L-glutamate + ATP = N-acetyl-L-glutamyl 5-phosphate + ADP. Its pathway is amino-acid biosynthesis; L-arginine biosynthesis; N(2)-acetyl-L-ornithine from L-glutamate: step 2/4. Its function is as follows. Catalyzes the ATP-dependent phosphorylation of N-acetyl-L-glutamate. This chain is Acetylglutamate kinase, found in Campylobacter jejuni subsp. jejuni serotype O:2 (strain ATCC 700819 / NCTC 11168).